The following is a 138-amino-acid chain: Actin-related protein 2/3 complex subunit 5 (138 aa).

The disordered stretch occupies residues 1–21 (MNYEDDNVESGQAGKSDAEYK).

The protein belongs to the ARPC5 family. In terms of assembly, component of the Arp2/3 complex composed of arpB/Arp2, arpC/Arp3, arcA/p41-arc, arcB/p34-arc, arcC/p21-arc, arcD/p20-arc and arcE/p16-arc. Interacts with carmil (via the region between the LRR domain and COOH-terminal proline-rich domain); carmil is required for Arp2/3-dependent actin nucleation. Arp2/3 complex, MyoB, MyoC, and the alpha and beta subunits of capping protein all form a larger complex with carmil.

It is found in the cytoplasm. It localises to the cytoskeleton. The protein localises to the cytosol. The protein resides in the cell cortex. Its subcellular location is the cell projection. It is found in the pseudopodium. Its function is as follows. Functions as a component of the Arp2/3 complex which is involved in regulation of actin polymerization and together with an activating nucleation-promoting factor (NPF) mediates the formation of branched actin networks. Seems to contact the pointed end of the daughter actin filament. The Arp2/3 complex is involved in organizing the actin system in cell motility and chemotaxis, in phagocytosis and macropinocytosis, at late steps of endosome processing, and in mitosis. In concert with a group of other proteins, the Arp2/3 complex plays a general role in the rapid activation and adaptation of the actin system to its multiple functions. This Dictyostelium discoideum (Social amoeba) protein is Actin-related protein 2/3 complex subunit 5 (arcE).